The following is a 152-amino-acid chain: MASLEDGIYRLRAVTTHNPDPGVGGEYATVEGARRPVKAEPNTPPFFEQQIWQVTRNADGQYTIKYQGLNTPFEYGFSYDELEPNAPVIAGDPKEYILQLVPSTADVYIIRAPIQRIGVDVEVGVQGNTLVYKFFPVDGSGGDRPAWRFTRE.

This sequence belongs to the protease inhibitor I48 family. In terms of assembly, homodimer. As to expression, expressed in all analyzed tissues, but expression was higher in the pileus and in the lower part of the stipe.

Its function is as follows. Binds and inhibits cysteine proteinases. Inhibits most strongly papain and cathepsin L, more weakly bromelain and cathepsin B while it is completely ineffective against cathepsin H. This is Clitocypin-2 (clt2) from Clitocybe nebularis (Clouded agaric).